We begin with the raw amino-acid sequence, 214 residues long: Thymidylate kinase (214 aa).

10–17 provides a ligand contact to ATP; it reads GGEGAGKS.

Belongs to the thymidylate kinase family.

The catalysed reaction is dTMP + ATP = dTDP + ADP. Its function is as follows. Phosphorylation of dTMP to form dTDP in both de novo and salvage pathways of dTTP synthesis. The sequence is that of Thymidylate kinase from Brucella suis (strain ATCC 23445 / NCTC 10510).